A 78-amino-acid polypeptide reads, in one-letter code: D-alanyl carrier protein (78 aa).

One can recognise a Carrier domain in the interval 1 to 78; it reads MEFKNQVYGI…HIAEQLAEMK (78 aa). An O-(pantetheine 4'-phosphoryl)serine modification is found at Ser36.

This sequence belongs to the DltC family. 4'-phosphopantetheine is transferred from CoA to a specific serine of apo-DCP.

It localises to the cytoplasm. It participates in cell wall biogenesis; lipoteichoic acid biosynthesis. In terms of biological role, carrier protein involved in the D-alanylation of lipoteichoic acid (LTA). The loading of thioester-linked D-alanine onto DltC is catalyzed by D-alanine--D-alanyl carrier protein ligase DltA. The DltC-carried D-alanyl group is further transferred to cell membrane phosphatidylglycerol (PG) by forming an ester bond, probably catalyzed by DltD. D-alanylation of LTA plays an important role in modulating the properties of the cell wall in Gram-positive bacteria, influencing the net charge of the cell wall. The protein is D-alanyl carrier protein of Bacillus pumilus (strain SAFR-032).